A 174-amino-acid polypeptide reads, in one-letter code: uncharacterized protein (174 aa).

Residues 1-31 (MCCVYRMNRPASGLTVVFCGKLSGKPGPKSA) form the signal peptide. The segment at 39-59 (KSGADDGGENPRFFSAGPRTE) is disordered.

This is an uncharacterized protein from Escherichia coli (strain K12).